Here is a 176-residue protein sequence, read N- to C-terminus: Macro domain-containing protein lmo2759 (176 aa).

Positions 1–175 (MEITIVKGDI…LYNKLINSEV (175 aa)) constitute a Macro domain.

Belongs to the MacroD-type family.

The polypeptide is Macro domain-containing protein lmo2759 (Listeria monocytogenes serovar 1/2a (strain ATCC BAA-679 / EGD-e)).